Here is a 350-residue protein sequence, read N- to C-terminus: UDP-N-acetylglucosamine--N-acetylmuramyl-(pentapeptide) pyrophosphoryl-undecaprenol N-acetylglucosamine transferase (350 aa).

UDP-N-acetyl-alpha-D-glucosamine-binding positions include 9–11 (TGG), Asn123, Arg159, Ser181, and Gln281.

Belongs to the glycosyltransferase 28 family. MurG subfamily.

It localises to the cell inner membrane. The enzyme catalyses di-trans,octa-cis-undecaprenyl diphospho-N-acetyl-alpha-D-muramoyl-L-alanyl-D-glutamyl-meso-2,6-diaminopimeloyl-D-alanyl-D-alanine + UDP-N-acetyl-alpha-D-glucosamine = di-trans,octa-cis-undecaprenyl diphospho-[N-acetyl-alpha-D-glucosaminyl-(1-&gt;4)]-N-acetyl-alpha-D-muramoyl-L-alanyl-D-glutamyl-meso-2,6-diaminopimeloyl-D-alanyl-D-alanine + UDP + H(+). It functions in the pathway cell wall biogenesis; peptidoglycan biosynthesis. Its function is as follows. Cell wall formation. Catalyzes the transfer of a GlcNAc subunit on undecaprenyl-pyrophosphoryl-MurNAc-pentapeptide (lipid intermediate I) to form undecaprenyl-pyrophosphoryl-MurNAc-(pentapeptide)GlcNAc (lipid intermediate II). The chain is UDP-N-acetylglucosamine--N-acetylmuramyl-(pentapeptide) pyrophosphoryl-undecaprenol N-acetylglucosamine transferase from Helicobacter hepaticus (strain ATCC 51449 / 3B1).